A 73-amino-acid chain; its full sequence is UPF0435 protein lmo1707 (73 aa).

This sequence belongs to the UPF0435 family.

The protein is UPF0435 protein lmo1707 of Listeria monocytogenes serovar 1/2a (strain ATCC BAA-679 / EGD-e).